Here is a 602-residue protein sequence, read N- to C-terminus: Rho family-interacting cell polarization regulator 2 (602 aa).

Residues 46–73 form a disordered region; it reads KKPQAKVKKMHNLGHKNSTTPKEPQPKR. Positions 48–59 are enriched in basic residues; sequence PQAKVKKMHNLG. Positions 83–112 form a coiled coil; the sequence is NGLDEYLEVHQTELDKLTAQLKDMRRNSRL. The tract at residues 173-421 is necessary for interaction with NCAM and myoblast protrusion formation; the sequence is RESLTEINRS…TTAATQHRAL (249 aa). The segment at 384–474 is disordered; sequence GDLPYEDRVP…RSEVCQKPSN (91 aa). Polar residues predominate over residues 403–416; that stretch reads AHVSSSPDITTAAT. A compositionally biased stretch (low complexity) spans 423–437; sequence SSESSSPDCSSSDSC.

The protein belongs to the RIPOR family. Homooligomer; homooligomerization is regulated by RHOC and leads to the formation of concatemers through the association of N- and C-termini. Interacts with NCAM.

The protein localises to the cytoplasm. The protein resides in the cytoskeleton. It localises to the cell projection. Its subcellular location is the filopodium. It is found in the apical cell membrane. The protein localises to the stereocilium. The protein resides in the stereocilium membrane. Acts as an inhibitor of the small GTPase RHOA and plays several roles in the regulation of myoblast and hair cell differentiation, lymphocyte T proliferation and neutrophil polarization. Plays a role in fetal mononuclear myoblast differentiation by promoting filopodia and myotube formation. Maintains naive T lymphocytes in a quiescent state and prevents chemokine-induced T lymphocyte responses, such as cell adhesion, polarization and migration. Involved also in the regulation of neutrophil polarization, chemotaxis and adhesion. Required for normal development of inner and outer hair cell stereocilia within the cochlea of the inner ear. Plays a role for maintaining the structural organization of the basal domain of stereocilia. Involved in mechanosensory hair cell function. Required for normal hearing. The chain is Rho family-interacting cell polarization regulator 2 from Gallus gallus (Chicken).